Reading from the N-terminus, the 261-residue chain is Mannose-specific lectin 2 (261 aa).

The N-terminal stretch at 1–23 (MAKLLLFLLPAILGLLIPRSAVA) is a signal peptide. Bulb-type lectin domains lie at 26 to 131 (TNYL…PWVP) and 145 to 252 (DNLL…SKRS). Residues 51–55 (QNDCN), tyrosine 59, tryptophan 63, glutamine 64, 170–174 (QGDCN), tyrosine 178, and 182–185 (YGWQ) each bind beta-D-mannose. A Carbohydrate-binding motif 1 motif is present at residues 51-59 (QNDCNLVLY). 2 disulfide bridges follow: cysteine 54–cysteine 74 and cysteine 173–cysteine 195. Positions 170 to 178 (QGDCNLVLY) match the Carbohydrate-binding motif 2 motif.

In terms of assembly, forms heterotetramer of 2 chains 1 and 2 chains 2 arranged as a dimer of chain 1 and chain 2 heterodimers.

Functionally, mannose-specific lectin. Shows agglutinating activity towards erythrocytes from rabbit. The protein is Mannose-specific lectin 2 of Colocasia esculenta (Wild taro).